Reading from the N-terminus, the 340-residue chain is Glyceraldehyde-3-phosphate dehydrogenase (340 aa).

NAD(+)-binding positions include 11–12 (SI) and Gly111. Residue 140–142 (SCN) coordinates D-glyceraldehyde 3-phosphate. Catalysis depends on Cys141, which acts as the Nucleophile. Arg169 provides a ligand contact to NAD(+). Position 195–196 (195–196 (HG)) interacts with D-glyceraldehyde 3-phosphate. Gln303 contacts NAD(+).

It belongs to the glyceraldehyde-3-phosphate dehydrogenase family. As to quaternary structure, homotetramer.

It localises to the cytoplasm. The catalysed reaction is D-glyceraldehyde 3-phosphate + phosphate + NADP(+) = (2R)-3-phospho-glyceroyl phosphate + NADPH + H(+). It carries out the reaction D-glyceraldehyde 3-phosphate + phosphate + NAD(+) = (2R)-3-phospho-glyceroyl phosphate + NADH + H(+). It participates in carbohydrate degradation; glycolysis; pyruvate from D-glyceraldehyde 3-phosphate: step 1/5. The polypeptide is Glyceraldehyde-3-phosphate dehydrogenase (Methanococcus maripaludis (strain C7 / ATCC BAA-1331)).